The following is a 238-amino-acid chain: Ribonuclease PH (238 aa).

Residues R86 and 124–126 (GTR) each bind phosphate.

This sequence belongs to the RNase PH family. Homohexameric ring arranged as a trimer of dimers.

It catalyses the reaction tRNA(n+1) + phosphate = tRNA(n) + a ribonucleoside 5'-diphosphate. In terms of biological role, phosphorolytic 3'-5' exoribonuclease that plays an important role in tRNA 3'-end maturation. Removes nucleotide residues following the 3'-CCA terminus of tRNAs; can also add nucleotides to the ends of RNA molecules by using nucleoside diphosphates as substrates, but this may not be physiologically important. Probably plays a role in initiation of 16S rRNA degradation (leading to ribosome degradation) during starvation. In Haemophilus influenzae (strain 86-028NP), this protein is Ribonuclease PH.